A 322-amino-acid chain; its full sequence is Protease HtpX homolog (322 aa).

2 helical membrane passes run 19–39 (ILLI…CYLL) and 61–81 (FINL…IAYF). Histidine 165 lines the Zn(2+) pocket. Residue glutamate 166 is part of the active site. A Zn(2+)-binding site is contributed by histidine 169. Helical transmembrane passes span 175–195 (VRLL…AQIA) and 216–236 (ILIL…ATLM). Glutamate 245 contacts Zn(2+).

This sequence belongs to the peptidase M48B family. Requires Zn(2+) as cofactor.

It localises to the cell inner membrane. This is Protease HtpX homolog from Bacteroides fragilis (strain YCH46).